The chain runs to 86 residues: Large ribosomal subunit protein eL43 (86 aa).

Residues 38-59 (CPVCGRKAVRRISTGIWQCQKC) form a C4-type zinc finger.

Belongs to the eukaryotic ribosomal protein eL43 family. Requires Zn(2+) as cofactor.

The protein is Large ribosomal subunit protein eL43 of Thermococcus gammatolerans (strain DSM 15229 / JCM 11827 / EJ3).